Consider the following 456-residue polypeptide: MNLWTKIFQPPCHIKEISDPELVKKQYKYWRMRIFYSMFLGYVFFYFTRKSFTFAMPTLIADLGFDKAQLGIIGSTLYITYGISKFVSGVMSDQSNPRYFMAIGLIITGISNIFFGLSSTIPLFVLFWGINGWFQGWGWPPCARLLTHWYSKSERGTWWSVWSTSHNIGGALIPVLTGVAIDYTGWRGAMFIPGIICIIMGFILIDRLRDTPQSLGLPAIEKFRKEEDAHPHEETTADILEEEAERELSTKEILFTYVLSNKWLWFLSFASFFIYVVRMAVNDWSALYLIETKDYSTVKANLCVSLFEIGGLFGMLLAGWLSDTISKGKRGPMNVVFSLGLLVSILGLWGTRDYFVWWIDGTFLFIIGFFLFGPQMMIGLAAAELSHKKAAGTASGFTGWFAYFGAAFAGYPLGKVAQDWGWHGFFVALLACALIALILFLPTWNASEQSLRKHSH.

11 helical membrane-spanning segments follow: residues 34 to 54, 70 to 90, 113 to 133, 161 to 181, 185 to 205, 257 to 277, 302 to 322, 331 to 351, 363 to 383, 394 to 414, and 421 to 441; these read IFYSMFLGYVFFYFTRKSFTF, LGIIGSTLYITYGISKFVSGV, IFFGLSSTIPLFVLFWGINGW, VWSTSHNIGGALIPVLTGVAI, GWRGAMFIPGIICIIMGFILI, YVLSNKWLWFLSFASFFIYVV, LCVSLFEIGGLFGMLLAGWLS, GPMNVVFSLGLLVSILGLWGT, FLFIIGFFLFGPQMMIGLAAA, ASGFTGWFAYFGAAFAGYPLG, and GWHGFFVALLACALIALILFL.

This sequence belongs to the major facilitator superfamily. Organophosphate:Pi antiporter (OPA) (TC 2.A.1.4) family.

Its subcellular location is the cell membrane. Functionally, transport protein for sugar phosphate uptake. This Chlamydia trachomatis serovar D (strain ATCC VR-885 / DSM 19411 / UW-3/Cx) protein is Probable hexose phosphate transport protein.